Consider the following 1158-residue polypeptide: Transient receptor potential cation channel subfamily M member 5 (1158 aa).

Topologically, residues Met-1–Ala-729 are cytoplasmic. Residue Ser-129 is modified to Phosphoserine; by PKC. Cys-341, Asp-350, Asp-353, and Glu-354 together coordinate Ca(2+). Residues Gly-488–Pro-507 are disordered. A coiled-coil region spans residues Lys-552 to Glu-572. The helical transmembrane segment at Pro-730 to Val-754 threads the bilayer. Residues Asp-755–Ser-764 are Extracellular-facing. Residues Gly-765 to Gln-784 traverse the membrane as a helical segment. Ca(2+)-binding residues include Glu-781 and Gln-784. Residues Gly-785–Asn-805 lie on the Cytoplasmic side of the membrane. Residues Trp-806 to Arg-824 form a helical membrane-spanning segment. Residues Asn-807 and Asp-810 each contribute to the Ca(2+) site. Over Met-825 to Glu-831 the chain is Extracellular. Residues Ala-832–Ile-854 form a helical membrane-spanning segment. The Cytoplasmic segment spans residues His-855–Ile-863. Residues Ile-864 to Leu-893 form a helical membrane-spanning segment. Over Leu-894–Glu-902 the chain is Extracellular. An intramembrane region (pore-forming) is located at residues Trp-903–Leu-938. The Selectivity filter motif lies at Phe-917–Gln-919. Over Leu-939–Ala-950 the chain is Extracellular. The chain crosses the membrane as a helical span at residues Asn-951 to Gln-985. Residues Gly-986–Thr-1158 are Cytoplasmic-facing. Glu-1002 is a Ca(2+) binding site. Residues Thr-1127 to Ala-1141 show a composition bias toward polar residues. Residues Thr-1127–Thr-1158 are disordered.

This sequence belongs to the transient receptor (TC 1.A.4) family. LTrpC subfamily. TRPM5 sub-subfamily. As to quaternary structure, homotetramer. In terms of processing, multiple phosphorylation sites regulate the Gq/ TRPM5 modulation axis, with the Ser-129 playing a substantial role in this positive modulation. As to expression, strongly expressed in liver, heart, testis, brain and kidney. Detected in fetal liver, kidney, spleen, brain, heart and lung, and in adult skin, eyes, spleen, stomach, small intestine, colon, lung, bladder, pancreas and thymus. Biallelically expressed at all stages and tissues examined. Also expressed in subsets of taste receptor cells of the tongue, in olfactory sensory neurons of the main olfactory epithelium and in the vomeronasal organ.

Its subcellular location is the cell membrane. The catalysed reaction is Na(+)(in) = Na(+)(out). It carries out the reaction K(+)(in) = K(+)(out). Ca(2+)-activated cation channel. Displays voltage dependence modulation. Regulated by PI(4,5)P2 levels. PI(4,5)P 2 reverses the Ca(2+) -induced desensitization of channels. Inhibited by flufenamic acid with an IC(50) of 24.5 uM and spermine with an IC(50) of 37 uM. Is a highly temperature-sensitive, heat activated channel showing a steep increase of inward currents at temperatures between 15 and 35 degrees Celsius. Heat activation is due to a shift of the voltage-dependent activation curve to negative potentials. The channel is blocked by extracellular acidification. Monovalent cation-selective ion channel activated by intracellular Ca(2+) in a voltage- and temperature-dependent manner. Mediates the transport of Na(+), K(+) and Cs(+) ions equally well. Activated directly by increase in intracellular Ca(2+), but is impermeable to it. The activation mechanism of TRPM5 involves a multistep process. TRPM5 activation involves ligand binding (i.e., tastant molecule, glucose stimulation) to Gq/G-protein coupled receptors (GPCR) and leads to the breakdown of phosphatidylinositol bisphosphate (PIP2) into diacylglycerol (DAG) and inositol trisphosphate (IP3), IP3 binds to its receptors in the endoplasmic reticulum and cause Ca(2+) release. Simultaneously with the intracellular Ca(2+) release, DAG activates the protein kinase C (PKC), which phosphorylates the TRPM5 channel. This phosphorylation combined with the bound Ca(2+), leads to a robust inward current allowing the entry of sodium ions (Na+) into the cell. This ion influx depolarizes the cell membrane, generating action potentials that propagate TRPM5 signals. Is a key player in sensing sweet, umami and bitter stimuli. May also be involved in sensing semiochemicals. Involved in insulin secretion by pancreatic beta cells. This is Transient receptor potential cation channel subfamily M member 5 from Mus musculus (Mouse).